The primary structure comprises 215 residues: Ribosomal RNA small subunit methyltransferase G (215 aa).

S-adenosyl-L-methionine contacts are provided by residues Gly-78, Leu-83, 128 to 129 (AE), and Arg-146.

It belongs to the methyltransferase superfamily. RNA methyltransferase RsmG family.

It localises to the cytoplasm. It catalyses the reaction guanosine(527) in 16S rRNA + S-adenosyl-L-methionine = N(7)-methylguanosine(527) in 16S rRNA + S-adenosyl-L-homocysteine. Its function is as follows. Specifically methylates the N7 position of guanine in position 527 of 16S rRNA. This is Ribosomal RNA small subunit methyltransferase G from Anaeromyxobacter dehalogenans (strain 2CP-C).